A 317-amino-acid polypeptide reads, in one-letter code: Curved DNA-binding protein (317 aa).

Residues 5 to 69 (DYYKILGVEP…QKRAEFDEIR (65 aa)) enclose the J domain.

It localises to the cytoplasm. The protein localises to the nucleoid. Functionally, DNA-binding protein that preferentially recognizes a curved DNA sequence. It is probably a functional analog of DnaJ; displays overlapping activities with DnaJ, but functions under different conditions, probably acting as a molecular chaperone in an adaptive response to environmental stresses other than heat shock. Lacks autonomous chaperone activity; binds native substrates and targets them for recognition by DnaK. Its activity is inhibited by the binding of CbpM. This Pseudomonas putida (strain W619) protein is Curved DNA-binding protein.